Here is a 573-residue protein sequence, read N- to C-terminus: Sulfite reductase [NADPH] hemoprotein beta-component (573 aa).

Positions 438, 444, 483, and 487 each coordinate [4Fe-4S] cluster. Cys487 provides a ligand contact to siroheme.

It belongs to the nitrite and sulfite reductase 4Fe-4S domain family. In terms of assembly, alpha(8)-beta(8). The alpha component is a flavoprotein, the beta component is a hemoprotein. The cofactor is siroheme. [4Fe-4S] cluster is required as a cofactor.

The catalysed reaction is hydrogen sulfide + 3 NADP(+) + 3 H2O = sulfite + 3 NADPH + 4 H(+). It functions in the pathway sulfur metabolism; hydrogen sulfide biosynthesis; hydrogen sulfide from sulfite (NADPH route): step 1/1. Its function is as follows. Component of the sulfite reductase complex that catalyzes the 6-electron reduction of sulfite to sulfide. This is one of several activities required for the biosynthesis of L-cysteine from sulfate. The polypeptide is Sulfite reductase [NADPH] hemoprotein beta-component (Shouchella clausii (strain KSM-K16) (Alkalihalobacillus clausii)).